Consider the following 666-residue polypeptide: Kinesin-like protein Nod (666 aa).

The Kinesin motor domain occupies 8–320; that stretch reads AVRIAVREAP…LRFGTSAKKL (313 aa). Position 87 to 94 (87 to 94) interacts with ATP; it reads GQTGTGKS. The interval 423–450 is disordered; the sequence is GFHSDSDKDRHLMPPPTGQEPRQASSQN. Residues 639–666 adopt a coiled-coil conformation; that stretch reads ENLFQVKSLPIWSGNKWERFCQINCLDT.

The protein belongs to the TRAFAC class myosin-kinesin ATPase superfamily. Kinesin family. As to expression, in adult female, found in meiotically active ovaries.

The protein localises to the cytoplasm. It localises to the cytoskeleton. Its function is as follows. Required for the distributive chromosome segregation of non-exchange chromosomes during meiosis. May be a microtubule motor required to hold distributively 'paired' chromosomes at the metaphase plate until anaphase. This is Kinesin-like protein Nod (nod) from Drosophila melanogaster (Fruit fly).